A 343-amino-acid polypeptide reads, in one-letter code: Phenylalanine--tRNA ligase alpha subunit (343 aa).

Glutamate 256 lines the Mg(2+) pocket.

It belongs to the class-II aminoacyl-tRNA synthetase family. Phe-tRNA synthetase alpha subunit type 1 subfamily. In terms of assembly, tetramer of two alpha and two beta subunits. It depends on Mg(2+) as a cofactor.

The protein resides in the cytoplasm. It carries out the reaction tRNA(Phe) + L-phenylalanine + ATP = L-phenylalanyl-tRNA(Phe) + AMP + diphosphate + H(+). The protein is Phenylalanine--tRNA ligase alpha subunit of Phytoplasma australiense.